The chain runs to 246 residues: 4-hydroxy-tetrahydrodipicolinate reductase (246 aa).

NAD(+) contacts are provided by residues 7 to 12 (GATGRT), 84 to 86 (GTT), and 108 to 111 (ASNF). Catalysis depends on His140, which acts as the Proton donor/acceptor. His141 lines the (S)-2,3,4,5-tetrahydrodipicolinate pocket. Residue Lys144 is the Proton donor of the active site. 150–151 (GT) provides a ligand contact to (S)-2,3,4,5-tetrahydrodipicolinate.

This sequence belongs to the DapB family.

It localises to the cytoplasm. The enzyme catalyses (S)-2,3,4,5-tetrahydrodipicolinate + NAD(+) + H2O = (2S,4S)-4-hydroxy-2,3,4,5-tetrahydrodipicolinate + NADH + H(+). The catalysed reaction is (S)-2,3,4,5-tetrahydrodipicolinate + NADP(+) + H2O = (2S,4S)-4-hydroxy-2,3,4,5-tetrahydrodipicolinate + NADPH + H(+). Its pathway is amino-acid biosynthesis; L-lysine biosynthesis via DAP pathway; (S)-tetrahydrodipicolinate from L-aspartate: step 4/4. Its function is as follows. Catalyzes the conversion of 4-hydroxy-tetrahydrodipicolinate (HTPA) to tetrahydrodipicolinate. The protein is 4-hydroxy-tetrahydrodipicolinate reductase of Natronomonas pharaonis (strain ATCC 35678 / DSM 2160 / CIP 103997 / JCM 8858 / NBRC 14720 / NCIMB 2260 / Gabara) (Halobacterium pharaonis).